The primary structure comprises 216 residues: Ribosomal RNA large subunit methyltransferase E (216 aa).

S-adenosyl-L-methionine contacts are provided by glycine 67, tryptophan 69, aspartate 87, aspartate 103, and aspartate 128. Lysine 168 functions as the Proton acceptor in the catalytic mechanism.

The protein belongs to the class I-like SAM-binding methyltransferase superfamily. RNA methyltransferase RlmE family.

It localises to the cytoplasm. The catalysed reaction is uridine(2552) in 23S rRNA + S-adenosyl-L-methionine = 2'-O-methyluridine(2552) in 23S rRNA + S-adenosyl-L-homocysteine + H(+). Functionally, specifically methylates the uridine in position 2552 of 23S rRNA at the 2'-O position of the ribose in the fully assembled 50S ribosomal subunit. The sequence is that of Ribosomal RNA large subunit methyltransferase E from Acinetobacter baumannii (strain AB307-0294).